Reading from the N-terminus, the 74-residue chain is Putative membrane protein insertion efficiency factor (74 aa).

The protein belongs to the UPF0161 family.

It is found in the cell inner membrane. Functionally, could be involved in insertion of integral membrane proteins into the membrane. The polypeptide is Putative membrane protein insertion efficiency factor (Anaeromyxobacter sp. (strain Fw109-5)).